The following is a 66-amino-acid chain: Large ribosomal subunit protein uL29 (66 aa).

It belongs to the universal ribosomal protein uL29 family.

The protein is Large ribosomal subunit protein uL29 of Thermotoga sp. (strain RQ2).